The chain runs to 617 residues: Na(+)/H(+) antiporter NhaA 1 (617 aa).

Residues 1–26 are disordered; it reads MTVTEPATQRGFPLLPSRLSRGSKAT. The na(+)/H(+) antiporter NhaA stretch occupies residues 1-433; sequence MTVTEPATQR…GWAIFRITDW (433 aa). 11 helical membrane passes run 33-53, 75-95, 113-133, 141-161, 171-191, 198-218, 234-254, 304-324, 341-361, 378-398, and 411-431; these read AAAL…SPWA, MTVK…IVGL, AVPV…FLAF, HAWG…LAII, LFLL…IAVL, VAPL…RYLP, IALY…ALLI, VSPV…AGVL, GIVA…TWLI, IAGG…IVDI, and IGVL…FRIT. The Thioredoxin domain maps to 434–617; the sequence is LSPPEPVGLK…LIRALEAGRG (184 aa).

This sequence in the N-terminal section; belongs to the NhaA Na(+)/H(+) (TC 2.A.33) antiporter family.

The protein localises to the cell membrane. The catalysed reaction is Na(+)(in) + 2 H(+)(out) = Na(+)(out) + 2 H(+)(in). Na(+)/H(+) antiporter that extrudes sodium in exchange for external protons. The protein is Na(+)/H(+) antiporter NhaA 1 of Mycolicibacterium gilvum (strain PYR-GCK) (Mycobacterium gilvum (strain PYR-GCK)).